A 443-amino-acid polypeptide reads, in one-letter code: F-box only protein 39 (443 aa).

Residues 13-59 form the F-box domain; the sequence is QSCWATLPDVCLRRVFWWLGDRDRSRAALVCRKWNQIMYSADLWRYR.

Directly interacts with SKP1 and CUL1.

In terms of biological role, substrate-recognition component of the SCF (SKP1-CUL1-F-box protein)-type E3 ubiquitin ligase complex. In Mus musculus (Mouse), this protein is F-box only protein 39 (Fbxo39).